The primary structure comprises 417 residues: Gamma-glutamyl phosphate reductase (417 aa).

The protein belongs to the gamma-glutamyl phosphate reductase family.

It localises to the cytoplasm. The catalysed reaction is L-glutamate 5-semialdehyde + phosphate + NADP(+) = L-glutamyl 5-phosphate + NADPH + H(+). It participates in amino-acid biosynthesis; L-proline biosynthesis; L-glutamate 5-semialdehyde from L-glutamate: step 2/2. Its function is as follows. Catalyzes the NADPH-dependent reduction of L-glutamate 5-phosphate into L-glutamate 5-semialdehyde and phosphate. The product spontaneously undergoes cyclization to form 1-pyrroline-5-carboxylate. This Meiothermus ruber protein is Gamma-glutamyl phosphate reductase.